An 862-amino-acid chain; its full sequence is Protein translocase subunit SecA (862 aa).

ATP-binding positions include Q88, G106–T110, and D506. Zn(2+)-binding residues include C839, C841, C850, and H851.

It belongs to the SecA family. Monomer and homodimer. Part of the essential Sec protein translocation apparatus which comprises SecA, SecYEG and auxiliary proteins SecDF-YajC and YidC. The cofactor is Zn(2+).

It localises to the cell inner membrane. The protein localises to the cytoplasm. It catalyses the reaction ATP + H2O + cellular proteinSide 1 = ADP + phosphate + cellular proteinSide 2.. Part of the Sec protein translocase complex. Interacts with the SecYEG preprotein conducting channel. Has a central role in coupling the hydrolysis of ATP to the transfer of proteins into and across the cell membrane, serving as an ATP-driven molecular motor driving the stepwise translocation of polypeptide chains across the membrane. This Campylobacter jejuni subsp. jejuni serotype O:2 (strain ATCC 700819 / NCTC 11168) protein is Protein translocase subunit SecA.